A 378-amino-acid polypeptide reads, in one-letter code: MTTQFSVAGVELELLRYPAQQESNLQAWDAADEHLLKSLIESEQAAVPTAIINDSFGALSCGVSKLNPSWPLCVETDARTSFLGTEQNHGRNQLPLDNLQWFTSRDTLPENLALVLMKLPKNLSYFAHQLTRLSQVLPAGTRVLVAAKAKSINGALLDIFAKHLGPASASLAWKNTRVITCVSDGKPRPLAKEVTWTVPEYQLEISNLSNVFAANKLDIGARIMLENLPKGDFKSIVDLGCGNGVLGLRTAQLFPEADIHFIDDSEMAVASAKANWARNQLPADKGHFYWDDCMTHLPEEVQPDLVLCNPPFHQGEAITDHIAWQMFLDARRRLKDGGILHIVGNRHLAYHVKLQRLFKNCTTVASNGKFVILQAQKK.

This sequence belongs to the methyltransferase superfamily. RlmG family.

The protein localises to the cytoplasm. The catalysed reaction is guanosine(1835) in 23S rRNA + S-adenosyl-L-methionine = N(2)-methylguanosine(1835) in 23S rRNA + S-adenosyl-L-homocysteine + H(+). In terms of biological role, specifically methylates the guanine in position 1835 (m2G1835) of 23S rRNA. The chain is Ribosomal RNA large subunit methyltransferase G from Shewanella baltica (strain OS195).